Reading from the N-terminus, the 116-residue chain is Putative membrane protein insertion efficiency factor (116 aa).

Belongs to the UPF0161 family.

It is found in the cell inner membrane. Could be involved in insertion of integral membrane proteins into the membrane. This chain is Putative membrane protein insertion efficiency factor, found in Bartonella tribocorum (strain CIP 105476 / IBS 506).